Here is a 488-residue protein sequence, read N- to C-terminus: MAAAATASTGTKGVVRQVIGPVLDVEFPAGKLPKILNALRIEGKNPAGQDVALTAEVQQLLGDHRVRAVAMSGTDGLVRGMEAIDTGSAISVPVGEATLGRIFNVLGEPVDEQGPVKTKTTSPIHREAPKLTDLETKPKVFETGIKVIDLLAPYRQGGKVGLFGGAGVGKTVLIQELINNIAKEHGGVSVFGGVGERTREGNDLYEEFKESGVINADDLTQSKVALCFGQMNEPPGARMRVGLSALTMAEHFRDVNKQDVLLFVDNIFRFVQAGSEVSALLGRMPSAVGYQPTLGTDVGELQERITSTLEGSITSIQAVYVPADDLTDPAPATTFAHLDATTVLARALAAKGIYPAVDPLDSTSTMLQPSVVGDEHYRTARAVQSTLQRYKELQDIIAILGLDELSEDDRRTVDRARKIEKFLSQPFFVAEIFTGMSGKYVKLEDTIAGFNMILSGELDDLPEQAFYLVGNITEVKEKAQKISADAKK.

164-171 provides a ligand contact to ATP; it reads GGAGVGKT.

It belongs to the ATPase alpha/beta chains family. In terms of assembly, F-type ATPases have 2 components, CF(1) - the catalytic core - and CF(0) - the membrane proton channel. CF(1) has five subunits: alpha(3), beta(3), gamma(1), delta(1), epsilon(1). CF(0) has four main subunits: a(1), b(1), b'(1) and c(9-12).

It is found in the cellular thylakoid membrane. The enzyme catalyses ATP + H2O + 4 H(+)(in) = ADP + phosphate + 5 H(+)(out). Produces ATP from ADP in the presence of a proton gradient across the membrane. The catalytic sites are hosted primarily by the beta subunits. The chain is ATP synthase subunit beta from Prochlorococcus marinus (strain SARG / CCMP1375 / SS120).